A 170-amino-acid chain; its full sequence is Adenine phosphoribosyltransferase (170 aa).

This sequence belongs to the purine/pyrimidine phosphoribosyltransferase family. Homodimer.

The protein resides in the cytoplasm. It carries out the reaction AMP + diphosphate = 5-phospho-alpha-D-ribose 1-diphosphate + adenine. It participates in purine metabolism; AMP biosynthesis via salvage pathway; AMP from adenine: step 1/1. Functionally, catalyzes a salvage reaction resulting in the formation of AMP, that is energically less costly than de novo synthesis. The polypeptide is Adenine phosphoribosyltransferase (Lactococcus lactis subsp. cremoris (strain SK11)).